Reading from the N-terminus, the 173-residue chain is Co-chaperone protein HscB homolog (173 aa).

The J domain maps to 5 to 77 (SHFALFDLEP…SQRARYLLSL (73 aa)).

It belongs to the HscB family. Interacts with HscA and stimulates its ATPase activity.

Functionally, co-chaperone involved in the maturation of iron-sulfur cluster-containing proteins. Seems to help targeting proteins to be folded toward HscA. The sequence is that of Co-chaperone protein HscB homolog from Azotobacter vinelandii (strain DJ / ATCC BAA-1303).